The primary structure comprises 229 residues: Ribulose-phosphate 3-epimerase (229 aa).

Ser-12 is a binding site for substrate. His-37, Asp-39, and His-70 together coordinate a divalent metal cation. Residue Asp-39 is the Proton acceptor of the active site. Substrate-binding positions include His-70, 146–149 (GFTG), 181–183 (DGG), and 203–204 (AS). Asp-181 is an a divalent metal cation binding site. Residue Asp-181 is the Proton donor of the active site.

It belongs to the ribulose-phosphate 3-epimerase family. A divalent metal cation is required as a cofactor.

It carries out the reaction D-ribulose 5-phosphate = D-xylulose 5-phosphate. It functions in the pathway carbohydrate degradation. Its function is as follows. Catalyzes the reversible epimerization of D-ribulose 5-phosphate to D-xylulose 5-phosphate. The chain is Ribulose-phosphate 3-epimerase from Chlamydia pneumoniae (Chlamydophila pneumoniae).